The chain runs to 464 residues: UDP-glucose:undecaprenyl-phosphate glucose-1-phosphate transferase (464 aa).

Over 1–15 (MTNLKKRERAKTNAS) the chain is Cytoplasmic. The helical transmembrane segment at 16-36 (LISMVQRFSDITIMFAGLWLV) threads the bilayer. Residues 37-38 (CE) are Periplasmic-facing. A helical transmembrane segment spans residues 39-59 (VSGLSFLYMHLLVALITLVVF). The Cytoplasmic segment spans residues 60–80 (QMLGGITDFYRSWRGVRAATE). A helical transmembrane segment spans residues 81-101 (FALLLQNWTLSVIFSAGLVAF). The Periplasmic portion of the chain corresponds to 102–104 (NND). Residues 105–125 (FDTQLKIWLAWYALTSIGLVV) traverse the membrane as a helical segment. The Cytoplasmic segment spans residues 126-278 (CRSCIRIGAG…VNRLLKRAED (153 aa)). The helical transmembrane segment at 279–299 (IVLATLILLLISPVLCCIALA) threads the bilayer. The Periplasmic portion of the chain corresponds to 300-464 (VKLSSPGPVI…FKGFVNKAAY (165 aa)).

It belongs to the bacterial sugar transferase family.

It localises to the cell inner membrane. It carries out the reaction di-trans,octa-cis-undecaprenyl phosphate + UDP-alpha-D-glucose = alpha-D-glucosyl di-trans,octa-cis-undecaprenyl diphosphate + UMP. It participates in exopolysaccharide biosynthesis; colanic acid biosynthesis. Is the initiating enzyme for colanic acid (CA) synthesis. Catalyzes the transfer of the glucose-1-phosphate moiety from UDP-Glc onto the carrier lipid undecaprenyl phosphate (C55-P), forming a phosphoanhydride bond yielding to glucosyl-pyrophosphoryl-undecaprenol (Glc-PP-C55). Also possesses a weak galactose-1-P transferase activity. The polypeptide is UDP-glucose:undecaprenyl-phosphate glucose-1-phosphate transferase (wcaJ) (Escherichia coli (strain K12)).